A 1008-amino-acid chain; its full sequence is Chitin synthase C (1008 aa).

Positions 1 to 160 (MIYEMMVMKR…GGRTIDPNNR (160 aa)) are disordered. Over residues 10–19 (RSANSRAQNN) the composition is skewed to low complexity. Positions 34–45 (ESPSRPVSSLGN) are enriched in polar residues. Asparagine 312 carries N-linked (GlcNAc...) asparagine glycosylation. Transmembrane regions (helical) follow at residues 642-662 (FMQL…FYFI), 682-702 (IFVI…IISM), 717-737 (IIVY…LVVI), 755-775 (LFVN…YASF), and 787-807 (SAAY…YAFC). Asparagine 833 is a glycosylation site (N-linked (GlcNAc...) asparagine). Helical transmembrane passes span 887–907 (MVSI…EVYG) and 910–930 (AGGT…LALI). Asparagine 961 carries N-linked (GlcNAc...) asparagine glycosylation.

It belongs to the chitin synthase family. Class II subfamily.

The protein resides in the cell membrane. It catalyses the reaction [(1-&gt;4)-N-acetyl-beta-D-glucosaminyl](n) + UDP-N-acetyl-alpha-D-glucosamine = [(1-&gt;4)-N-acetyl-beta-D-glucosaminyl](n+1) + UDP + H(+). Its function is as follows. Polymerizes chitin, a structural polymer of the cell wall and septum, by transferring the sugar moiety of UDP-GlcNAc to the non-reducing end of the growing chitin polymer. Involved in cell wall integrity and mycelial morphology. Plays an important role in septal growth or maintenance. Acts as a positive regulator of conidiation, cellular responses to oxidative stresses, and the production of malic acid. Negatively regulates the citric acid production. This is Chitin synthase C from Aspergillus niger (strain ATCC MYA-4892 / CBS 513.88 / FGSC A1513).